The primary structure comprises 399 residues: Rhodopsin, G0-coupled (399 aa).

At 1–17 the chain is on the extracellular side; that stretch reads MPFPLNRTDTALVISPS. N6 carries an N-linked (GlcNAc...) asparagine glycan. A helical transmembrane segment spans residues 18–43; the sequence is EFRIIGIFISICCIIGVLGNLLIIIV. Residues 44–55 are Cytoplasmic-facing; it reads FAKRRSVRRPIN. Residues 56–81 traverse the membrane as a helical segment; it reads FFVLNLAVSDLIVALLGYPMTAASAF. Residues 82–95 lie on the Extracellular side of the membrane; it reads SNRWIFDNIGCKIY. C92 and C169 form a disulfide bridge. The helical transmembrane segment at 96–115 threads the bilayer; the sequence is AFLCFNSGVISIMTHAALSF. The Cytoplasmic segment spans residues 116 to 134; that stretch reads CRYIIICQYGYRKKITQTT. Residues 135 to 158 traverse the membrane as a helical segment; that stretch reads VLRTLFSIWSFAMFWTLSPLFGWS. The Extracellular segment spans residues 159–182; it reads SYVIEVVPVSCSVNWYGHGLGDVS. Residues 183-210 traverse the membrane as a helical segment; that stretch reads YTISVIVAVYVFPLSIIVFSYGMILQEK. Residues 211–240 lie on the Cytoplasmic side of the membrane; the sequence is VCKDSRKNGIRAQQRYTPRFIQDIEQRVTF. The chain crosses the membrane as a helical span at residues 241–263; that stretch reads ISFLMMAAFMVAWTPYAIMSALA. At 264-271 the chain is on the extracellular side; sequence IGSFNVEN. The helical transmembrane segment at 272 to 295 threads the bilayer; the sequence is SFAALPTLFAKASCAYNPFIYAFT. Position 282 is an N6-(retinylidene)lysine (K282). Over 296 to 399 the chain is Cytoplasmic; that stretch reads NANFRDTVVE…NTFTADFSVI (104 aa).

It belongs to the G-protein coupled receptor 1 family. Opsin subfamily. Phosphorylated on some or all of the serine and threonine residues present in the C-terminal region. In terms of tissue distribution, retina. Expressed in the hyperpolarizing cell layer of the photoreceptor cells with its photoreceptive region adjacent to the lens.

It localises to the membrane. Visual pigments are the light-absorbing molecules that mediate vision. They consist of an apoprotein, opsin, covalently linked to cis-retinal. This is Rhodopsin, G0-coupled (SCOP2) from Mizuhopecten yessoensis (Japanese scallop).